The primary structure comprises 207 residues: Outer-membrane lipoprotein LolB (207 aa).

Residues 1–21 (MPLPDFRLIRLLPLASLVLTA) form the signal peptide. A lipid anchor (N-palmitoyl cysteine) is attached at C22. The S-diacylglycerol cysteine moiety is linked to residue C22.

Belongs to the LolB family. Monomer.

The protein resides in the cell outer membrane. Plays a critical role in the incorporation of lipoproteins in the outer membrane after they are released by the LolA protein. The chain is Outer-membrane lipoprotein LolB from Escherichia fergusonii (strain ATCC 35469 / DSM 13698 / CCUG 18766 / IAM 14443 / JCM 21226 / LMG 7866 / NBRC 102419 / NCTC 12128 / CDC 0568-73).